Consider the following 97-residue polypeptide: Co-chaperonin GroES (97 aa).

This sequence belongs to the GroES chaperonin family. In terms of assembly, heptamer of 7 subunits arranged in a ring. Interacts with the chaperonin GroEL.

Its subcellular location is the cytoplasm. Its function is as follows. Together with the chaperonin GroEL, plays an essential role in assisting protein folding. The GroEL-GroES system forms a nano-cage that allows encapsulation of the non-native substrate proteins and provides a physical environment optimized to promote and accelerate protein folding. GroES binds to the apical surface of the GroEL ring, thereby capping the opening of the GroEL channel. In Buchnera aphidicola subsp. Pemphigus spyrothecae, this protein is Co-chaperonin GroES.